A 361-amino-acid polypeptide reads, in one-letter code: Protein RecA (361 aa).

77-84 (GPESSGKT) is a binding site for ATP.

The protein belongs to the RecA family.

The protein resides in the cytoplasm. Its function is as follows. Can catalyze the hydrolysis of ATP in the presence of single-stranded DNA, the ATP-dependent uptake of single-stranded DNA by duplex DNA, and the ATP-dependent hybridization of homologous single-stranded DNAs. It interacts with LexA causing its activation and leading to its autocatalytic cleavage. The chain is Protein RecA from Rhizobium rhizogenes (strain K84 / ATCC BAA-868) (Agrobacterium radiobacter).